We begin with the raw amino-acid sequence, 203 residues long: Large ribosomal subunit protein bL25 (203 aa).

This sequence belongs to the bacterial ribosomal protein bL25 family. CTC subfamily. In terms of assembly, part of the 50S ribosomal subunit; part of the 5S rRNA/L5/L18/L25 subcomplex. Contacts the 5S rRNA. Binds to the 5S rRNA independently of L5 and L18.

This is one of the proteins that binds to the 5S RNA in the ribosome where it forms part of the central protuberance. This chain is Large ribosomal subunit protein bL25, found in Rickettsia rickettsii (strain Iowa).